Consider the following 838-residue polypeptide: Protein P (838 aa).

The interval 1–177 (MPLSYQHFRK…FCGSPYSWEQ (177 aa)) is terminal protein domain (TP). The segment at 178–341 (ELQHQTSTRH…YCLTHIVNLL (164 aa)) is spacer. 2 disordered regions span residues 215-238 (QSRL…SGSI) and 285-311 (STSK…RSQS). Residues 285 to 294 (STSKRQSSSG) show a composition bias toward polar residues. Positions 342 to 685 (EDWGPCTEHG…YLHLYPVARQ (344 aa)) are polymerase/reverse transcriptase domain (RT). Residues 352–595 (EHNIRIPRTP…YSLNFMGYVI (244 aa)) form the Reverse transcriptase domain. Positions 424, 546, and 547 each coordinate Mg(2+).

Belongs to the hepadnaviridae P protein family.

It carries out the reaction DNA(n) + a 2'-deoxyribonucleoside 5'-triphosphate = DNA(n+1) + diphosphate. The enzyme catalyses Endonucleolytic cleavage to 5'-phosphomonoester.. Activated by host HSP70 and HSP40 in vitro to be able to bind the epsilon loop of the pgRNA. Because deletion of the RNase H region renders the protein partly chaperone-independent, the chaperones may be needed indirectly to relieve occlusion of the RNA-binding site by this domain. Inhibited by several reverse-transcriptase inhibitors: Lamivudine, Adefovir and Entecavir. Multifunctional enzyme that converts the viral RNA genome into dsDNA in viral cytoplasmic capsids. This enzyme displays a DNA polymerase activity that can copy either DNA or RNA templates, and a ribonuclease H (RNase H) activity that cleaves the RNA strand of RNA-DNA heteroduplexes in a partially processive 3'- to 5'-endonucleasic mode. Neo-synthesized pregenomic RNA (pgRNA) are encapsidated together with the P protein, and reverse-transcribed inside the nucleocapsid. Initiation of reverse-transcription occurs first by binding the epsilon loop on the pgRNA genome, and is initiated by protein priming, thereby the 5'-end of (-)DNA is covalently linked to P protein. Partial (+)DNA is synthesized from the (-)DNA template and generates the relaxed circular DNA (RC-DNA) genome. After budding and infection, the RC-DNA migrates in the nucleus, and is converted into a plasmid-like covalently closed circular DNA (cccDNA). The activity of P protein does not seem to be necessary for cccDNA generation, and is presumably released from (+)DNA by host nuclear DNA repair machinery. This Homo sapiens (Human) protein is Protein P.